The following is a 573-amino-acid chain: Splicing factor U2af large subunit B (573 aa).

The segment covering 1-12 (MPDYEGNGEDID) has biased composition (acidic residues). Residues 1–187 (MPDYEGNGED…DMAPPTSAML (187 aa)) are disordered. The span at 38–145 (SDSKSQHSSR…QREHAKDRES (108 aa)) shows a compositional bias: basic and acidic residues. Residues 161-173 (SRSRSRSRSKSKR) show a composition bias toward basic residues. 3 consecutive RRM domains span residues 239-322 (RRVY…RPSD), 359-437 (DRIF…RANQ), and 478-564 (EVIS…YPEN).

It belongs to the splicing factor SR family. Expressed in stems, leaves and apical buds.

Its subcellular location is the nucleus. Necessary for the splicing of pre-mRNA. Binds to the U -enriched regions of plant introns. The polypeptide is Splicing factor U2af large subunit B (U2AF65B) (Nicotiana plumbaginifolia (Leadwort-leaved tobacco)).